The chain runs to 564 residues: MQHETKMENQSWLKKLARRLGPGHIVNLCFIVVLLFSTLLTWREVVVLEDAYISSQRNHLENVANALDKHLQYNVDKLIFLRNGMREALVAPLDFTSLRDAVTEFEQHRDEHAWQIELNRRRTLSVNGVSDALVSEGNLLSRENESLDNEITAALEVGYLLRLAHNSSSMVEQAMYVSRAGFYVSTQPTLFTRNVPTRYYGYVTQPWFIGHSQRENRHRAVRWFTSQPEHASNTEPQVTVSVPVDSNNYWYGVLGMSIPVRTMQQFLRNAIDKNLDGEYQLYDSKLRFLTSSNPDHPTGNIFDPRELALLAQAMEHDTRGGIRMDSRYVSWERLDHFDGVLVRVHTLSEGVRGDFGSISIALTLLWALFTTMLLISWYVIRRMVSNMYVLQSSLQWQAWHDTLTRLYNRGALFEKARPLAKLCQTHQHPFSVIQVDLDHFKAINDRFGHQAGDRVLSHAAGLISSSLRAQDVAGRVGGEEFCVILPGASLTEAAEVAERIRLKLNEKEMLIAKSTTIRISASLGVSSSEETGDYDFEQLQSLADRRLYLAKQAGRNRVFASDNA.

2 helical membrane-spanning segments follow: residues 20 to 40 (LGPGHIVNLCFIVVLLFSTLL) and 360 to 380 (IALTLLWALFTTMLLISWYVI). Residues 428–563 (HPFSVIQVDL…GRNRVFASDN (136 aa)) enclose the GGDEF domain. Residue D436 participates in Mg(2+) binding. Residues N444, H449, and D453 each coordinate substrate. A Mg(2+)-binding site is contributed by E479. Catalysis depends on E479, which acts as the Proton acceptor.

In terms of assembly, homodimer. Mg(2+) is required as a cofactor.

Its subcellular location is the cell inner membrane. The enzyme catalyses 2 GTP = 3',3'-c-di-GMP + 2 diphosphate. It functions in the pathway glycan metabolism; bacterial cellulose biosynthesis. Its pathway is purine metabolism; 3',5'-cyclic di-GMP biosynthesis. Its function is as follows. Catalyzes the synthesis of cyclic-di-GMP (c-di-GMP) via the condensation of 2 GTP molecules. Cyclic-di-GMP is a second messenger which controls cell surface-associated traits in bacteria. Involved in the regulation of cellulose production. This chain is Probable diguanylate cyclase DgcQ, found in Escherichia coli O157:H7.